A 330-amino-acid polypeptide reads, in one-letter code: Succinylglutamate desuccinylase (330 aa).

3 residues coordinate Zn(2+): His53, Glu56, and His147. Glu210 is an active-site residue.

This sequence belongs to the AspA/AstE family. Succinylglutamate desuccinylase subfamily. Zn(2+) serves as cofactor.

The enzyme catalyses N-succinyl-L-glutamate + H2O = L-glutamate + succinate. It participates in amino-acid degradation; L-arginine degradation via AST pathway; L-glutamate and succinate from L-arginine: step 5/5. Its function is as follows. Transforms N(2)-succinylglutamate into succinate and glutamate. This Yersinia pseudotuberculosis serotype O:3 (strain YPIII) protein is Succinylglutamate desuccinylase.